The sequence spans 62 residues: Large ribosomal subunit protein uL30 (62 aa).

The protein belongs to the universal ribosomal protein uL30 family. Part of the 50S ribosomal subunit.

The polypeptide is Large ribosomal subunit protein uL30 (Herpetosiphon aurantiacus (strain ATCC 23779 / DSM 785 / 114-95)).